Consider the following 120-residue polypeptide: NAD(P)H-quinone oxidoreductase subunit 3 (120 aa).

Transmembrane regions (helical) follow at residues 6–26, 64–84, and 89–109; these read GYDA…LALV, MFAL…PWAV, and LGLL…VALA.

The protein belongs to the complex I subunit 3 family. NDH-1 can be composed of about 15 different subunits; different subcomplexes with different compositions have been identified which probably have different functions.

Its subcellular location is the cellular thylakoid membrane. The enzyme catalyses a plastoquinone + NADH + (n+1) H(+)(in) = a plastoquinol + NAD(+) + n H(+)(out). The catalysed reaction is a plastoquinone + NADPH + (n+1) H(+)(in) = a plastoquinol + NADP(+) + n H(+)(out). In terms of biological role, NDH-1 shuttles electrons from an unknown electron donor, via FMN and iron-sulfur (Fe-S) centers, to quinones in the respiratory and/or the photosynthetic chain. The immediate electron acceptor for the enzyme in this species is believed to be plastoquinone. Couples the redox reaction to proton translocation, and thus conserves the redox energy in a proton gradient. Cyanobacterial NDH-1 also plays a role in inorganic carbon-concentration. The sequence is that of NAD(P)H-quinone oxidoreductase subunit 3 from Synechococcus sp. (strain WH7803).